We begin with the raw amino-acid sequence, 92 residues long: Small ribosomal subunit protein uS19 (92 aa).

A disordered region spans residues 73–92 (EFSPTRSFRGHAGAKNKGRK). Residues 80 to 92 (FRGHAGAKNKGRK) show a composition bias toward basic residues.

This sequence belongs to the universal ribosomal protein uS19 family.

In terms of biological role, protein S19 forms a complex with S13 that binds strongly to the 16S ribosomal RNA. In Christiangramia forsetii (strain DSM 17595 / CGMCC 1.15422 / KT0803) (Gramella forsetii), this protein is Small ribosomal subunit protein uS19.